The chain runs to 382 residues: Mannitol-1-phosphate 5-dehydrogenase (382 aa).

3-14 (ALHFGAGNIGRG) lines the NAD(+) pocket.

This sequence belongs to the mannitol dehydrogenase family.

The catalysed reaction is D-mannitol 1-phosphate + NAD(+) = beta-D-fructose 6-phosphate + NADH + H(+). This chain is Mannitol-1-phosphate 5-dehydrogenase, found in Salmonella paratyphi A (strain ATCC 9150 / SARB42).